The primary structure comprises 291 residues: Protein ZAR1-like (291 aa).

The interval 103-152 (GSQTLHSSSLSDRTSSRKPTEAWEVGRRALIRRPQDGEDEESQEELTGPT) is disordered. A compositionally biased stretch (low complexity) spans 106 to 115 (TLHSSSLSDR). A compositionally biased stretch (basic and acidic residues) spans 116–129 (TSSRKPTEAWEVGR). The segment at 195–280 (LKYGYFHCKD…QELCGHCKDK (86 aa)) adopts a 3CxxC-type zinc-finger fold.

The protein belongs to the ZAR1 family. As to quaternary structure, interacts with YBX2. In terms of tissue distribution, expressed in oocytes and zygotes. Predominantly expressed in maturing oocytes before maternal-to-zygotic transition (MZT). Less abundant than Zar1.

It is found in the cytoplasm. Its subcellular location is the cytoplasmic ribonucleoprotein granule. MRNA-binding protein required for maternal mRNA storage, translation and degradation during oocyte maturation. Probably promotes formation of some phase-separated membraneless compartment that stores maternal mRNAs in oocytes: acts by undergoing liquid-liquid phase separation upon binding to maternal mRNAs. Binds to the 3'-UTR of maternal mRNAs, inhibiting their translation. The protein is Protein ZAR1-like of Mus musculus (Mouse).